The following is a 282-amino-acid chain: Pantothenate synthetase (282 aa).

Residue methionine 29–histidine 36 participates in ATP binding. Histidine 36 functions as the Proton donor in the catalytic mechanism. Glutamine 60 contacts (R)-pantoate. A beta-alanine-binding site is contributed by glutamine 60. Glycine 146–aspartate 149 serves as a coordination point for ATP. Glutamine 152 lines the (R)-pantoate pocket. Residues isoleucine 175 and lysine 183 to arginine 186 each bind ATP.

This sequence belongs to the pantothenate synthetase family. As to quaternary structure, homodimer.

Its subcellular location is the cytoplasm. It carries out the reaction (R)-pantoate + beta-alanine + ATP = (R)-pantothenate + AMP + diphosphate + H(+). The protein operates within cofactor biosynthesis; (R)-pantothenate biosynthesis; (R)-pantothenate from (R)-pantoate and beta-alanine: step 1/1. Functionally, catalyzes the condensation of pantoate with beta-alanine in an ATP-dependent reaction via a pantoyl-adenylate intermediate. In Clostridioides difficile (strain 630) (Peptoclostridium difficile), this protein is Pantothenate synthetase.